We begin with the raw amino-acid sequence, 443 residues long: Deoxyguanosinetriphosphate triphosphohydrolase-like protein (443 aa).

An HD domain is found at 61-246 (RLTHSLEVAC…MEAADDICYG (186 aa)).

This sequence belongs to the dGTPase family. Type 3 subfamily.

The chain is Deoxyguanosinetriphosphate triphosphohydrolase-like protein from Pseudomonas aeruginosa (strain LESB58).